The sequence spans 407 residues: SERPINE1 mRNA-binding protein 1 (407 aa).

S25 bears the Phosphoserine mark. The disordered stretch occupies residues 33-227; it reads AAENKKKEAG…GSGSHNWGTV (195 aa). A compositionally biased stretch (low complexity) spans 51–68; the sequence is AKSAAQAAAQTNSNAAGK. An N6-acetyllysine; alternate modification is found at K52. K52 participates in a covalent cross-link: Glycyl lysine isopeptide (Lys-Gly) (interchain with G-Cter in SUMO1); alternate. K68 carries the N6-acetyllysine modification. 3 stretches are compositionally biased toward basic and acidic residues: residues 70-80, 89-114, and 122-162; these read LRKESQKDRKN, VDKKEETQPPVALKKEGIRRVGRRPD, and KIID…DRPI. A Glycyl lysine isopeptide (Lys-Gly) (interchain with G-Cter in SUMO1); alternate cross-link involves residue K102. K102 participates in a covalent cross-link: Glycyl lysine isopeptide (Lys-Gly) (interchain with G-Cter in SUMO2). A Glycyl lysine isopeptide (Lys-Gly) (interchain with G-Cter in SUMO2); alternate cross-link involves residue K102. N6-acetyllysine is present on residues K122 and K140. Residues 164–182 are compositionally biased toward gly residues; the sequence is GRGGLGRGRGGRGRGMGRG. Residues R165 and R188 each carry the omega-N-methylarginine modification. The segment covering 183-199 has biased composition (basic and acidic residues); the sequence is DGFDSRGKREFDRHSGS. Phosphoserine occurs at positions 197, 199, 203, 205, and 208. Position 211 is an N6-acetyllysine; alternate (K211). A Glycyl lysine isopeptide (Lys-Gly) (interchain with G-Cter in SUMO2); alternate cross-link involves residue K211. R216 is modified (omega-N-methylarginine). S221 is subject to Phosphoserine. A Phosphothreonine modification is found at T226. Residue K228 forms a Glycyl lysine isopeptide (Lys-Gly) (interchain with G-Cter in SUMO1); alternate linkage. K228 participates in a covalent cross-link: Glycyl lysine isopeptide (Lys-Gly) (interchain with G-Cter in SUMO2); alternate. Residue S234 is modified to Phosphoserine. The span at 242-256 shows a compositional bias: polar residues; it reads ISYNCSDLDQSNVTE. 2 disordered regions span residues 242-291 and 327-407; these read ISYN…TLDE and SKSE…PALA. The segment covering 261-274 has biased composition (basic and acidic residues); the sequence is GEEHPVADTENKEN. K280 participates in a covalent cross-link: Glycyl lysine isopeptide (Lys-Gly) (interchain with G-Cter in SUMO1); alternate. A Glycyl lysine isopeptide (Lys-Gly) (interchain with G-Cter in SUMO2) cross-link involves residue K280. A Glycyl lysine isopeptide (Lys-Gly) (interchain with G-Cter in SUMO2); alternate cross-link involves residue K280. Composition is skewed to basic and acidic residues over residues 281-291 and 327-341; these read EEGPKEMTLDE and SKSEEAHAEDSVMDH. N6-acetyllysine is present on K328. A Phosphoserine modification is found at S329. The span at 362–371 shows a compositional bias: gly residues; that stretch reads GRPGRGGRGG. Omega-N-methylarginine occurs at positions 363, 366, and 369. Phosphoserine occurs at positions 391 and 393.

The protein belongs to the SERBP1-HABP4 family. Associates with mature 80S ribosomes. Interacts with EEF2/eEF2; interaction sequesters EEF2/eEF2 at the A-site of the ribosome, thereby blocking the interaction sites of the mRNA-tRNA complex, promoting ribosome stabilization and hibernation. Interacts with SPIN1. Interacts with CHD3 and TDRD3. Interacts with ZDHHC17 (via ANK repeats). Phosphorylation by MTOR inhibits SERBP1 and relieves ribosome hibernation.

Its function is as follows. Ribosome-binding protein that promotes ribosome hibernation, a process during which ribosomes are stabilized in an inactive state and preserved from proteasomal degradation. Acts via its association with EEF2/eEF2 factor, sequestering EEF2/eEF2 at the A-site of the ribosome and promoting ribosome stabilization and storage in an inactive state. May also play a role in the regulation of mRNA stability: binds to the 3'-most 134 nt of the SERPINE1/PAI1 mRNA, a region which confers cyclic nucleotide regulation of message decay. Seems to play a role in PML-nuclear bodies formation. The polypeptide is SERPINE1 mRNA-binding protein 1 (Oryctolagus cuniculus (Rabbit)).